The primary structure comprises 706 residues: Probable cyclic nucleotide-gated ion channel 3 (706 aa).

The Cytoplasmic segment spans residues 1–85 (MMNPQRNKFV…NDSYLQSWNK (85 aa)). A helical membrane pass occupies residues 86-106 (IFLLLSVVALAFDPLFFYIPY). Over 107–119 (VKPERFCLNLDKK) the chain is Extracellular. The chain crosses the membrane as a helical span at residues 120 to 140 (LQTIACVFRTFIDAFYVVHML). Residues 141-174 (FQFHTGFITPSSSGFGRGELNEKHKDIALRYLGS) lie on the Cytoplasmic side of the membrane. A helical transmembrane segment spans residues 175–195 (YFLIDLLSILPIPQVVVLAIV). Over 196 to 208 (PRMRRPASLVAKE) the chain is Extracellular. A helical transmembrane segment spans residues 209 to 229 (LLKWVIFCQYVPRIARIYPLF). Topologically, residues 230–247 (KEVTRTSGLVTETAWAGA) are cytoplasmic. The helical transmembrane segment at 248-268 (ALNLFLYMLASHVFGSFWYLI) threads the bilayer. At 269–371 (SIERKDRCWR…QNLKTSAFEG (103 aa)) the chain is on the extracellular side. Residues 372–392 (EIIFAIVICISGLVLFALLIG) traverse the membrane as a helical segment. At 393–706 (NMQKYLQSTT…ADPEFPMDET (314 aa)) the chain is on the cytoplasmic side. Residues 477-600 (WFQA…KQLR) and D548 contribute to the a nucleoside 3',5'-cyclic phosphate site. The segment at 591-606 (YRRLHSKQLRHMFRFY) is calmodulin-binding. Residues 611–640 (QTWAACFIQAAWKRHCRRKLSKALREEEGK) form the IQ domain.

Belongs to the cyclic nucleotide-gated cation channel (TC 1.A.1.5) family. Homotetramer or heterotetramer.

The protein localises to the cell membrane. Probable cyclic nucleotide-gated ion channel. The protein is Probable cyclic nucleotide-gated ion channel 3 (CNGC3) of Arabidopsis thaliana (Mouse-ear cress).